Consider the following 525-residue polypeptide: GMP synthase [glutamine-hydrolyzing] (525 aa).

Residues Lys8 to Asn207 form the Glutamine amidotransferase type-1 domain. Cys85 serves as the catalytic Nucleophile. Active-site residues include His181 and Glu183. Residues Trp208 to Arg400 enclose the GMPS ATP-PPase domain. ATP is bound at residue Ser235–Ser241.

In terms of assembly, homodimer.

The catalysed reaction is XMP + L-glutamine + ATP + H2O = GMP + L-glutamate + AMP + diphosphate + 2 H(+). It participates in purine metabolism; GMP biosynthesis; GMP from XMP (L-Gln route): step 1/1. Its function is as follows. Catalyzes the synthesis of GMP from XMP. The protein is GMP synthase [glutamine-hydrolyzing] of Shewanella baltica (strain OS155 / ATCC BAA-1091).